The sequence spans 174 residues: Adipose-secreted signaling protein (174 aa).

Ala2 is subject to N-acetylalanine. Position 147 is a phosphothreonine (Thr147).

Belongs to the ADISSP family.

The protein localises to the secreted. Functionally, adipocyte-secreted protein (adipokine) that acts as a key regulator for white adipose tissue (WAT) thermogenesis and glucose homeostasis at least in part through activation of protein kinase A (PKA). This is Adipose-secreted signaling protein from Rattus norvegicus (Rat).